A 355-amino-acid chain; its full sequence is NADH-quinone oxidoreductase subunit H (355 aa).

8 helical membrane passes run 25-45 (LVRILVVAVVILLCVAYLILW), 91-111 (WLYLVAPVMTVVPAFAVWAVI), 126-146 (LLYAMAISSIGVYAVILAGWA), 170-190 (MGFALVLVLMTAGSLNLSEIV), 205-225 (FLSWNWLPLLPAFVVYFVSGI), 253-273 (MAFALFFLAEYINMIVISALA), 290-310 (FIPGIFWLVLKVFALLSVFIW), and 330-350 (VFLPVTVIWVVVVGFWMMSPL).

This sequence belongs to the complex I subunit 1 family. As to quaternary structure, NDH-1 is composed of 14 different subunits. Subunits NuoA, H, J, K, L, M, N constitute the membrane sector of the complex.

The protein localises to the cell inner membrane. The catalysed reaction is a quinone + NADH + 5 H(+)(in) = a quinol + NAD(+) + 4 H(+)(out). Its function is as follows. NDH-1 shuttles electrons from NADH, via FMN and iron-sulfur (Fe-S) centers, to quinones in the respiratory chain. The immediate electron acceptor for the enzyme in this species is believed to be ubiquinone. Couples the redox reaction to proton translocation (for every two electrons transferred, four hydrogen ions are translocated across the cytoplasmic membrane), and thus conserves the redox energy in a proton gradient. This subunit may bind ubiquinone. This Burkholderia vietnamiensis (strain G4 / LMG 22486) (Burkholderia cepacia (strain R1808)) protein is NADH-quinone oxidoreductase subunit H.